Consider the following 630-residue polypeptide: Cytochrome B pre-mRNA-processing protein 2 (630 aa).

The protein localises to the mitochondrion. Its function is as follows. Appears to be specifically required for the splicing of the terminal intron (bI5) of the cytochrome b pre-mRNA. Can also stimulates the splicing of the omega intron of the precursor of large ribosomal RNA. In Saccharomyces paradoxus (Yeast), this protein is Cytochrome B pre-mRNA-processing protein 2 (CBP2).